The sequence spans 201 residues: 3-isopropylmalate dehydratase small subunit (201 aa).

The protein belongs to the LeuD family. LeuD type 1 subfamily. In terms of assembly, heterodimer of LeuC and LeuD.

It carries out the reaction (2R,3S)-3-isopropylmalate = (2S)-2-isopropylmalate. It participates in amino-acid biosynthesis; L-leucine biosynthesis; L-leucine from 3-methyl-2-oxobutanoate: step 2/4. Its function is as follows. Catalyzes the isomerization between 2-isopropylmalate and 3-isopropylmalate, via the formation of 2-isopropylmaleate. The protein is 3-isopropylmalate dehydratase small subunit of Cereibacter sphaeroides (strain KD131 / KCTC 12085) (Rhodobacter sphaeroides).